Reading from the N-terminus, the 893-residue chain is Protein kintoun (893 aa).

5 disordered regions span residues 211–243 (KNATAEEREPHPLEHTYPKKPEANAGKPKVLPM), 372–395 (LSREDSGVELNSNSESPAEDEEAG), 587–719 (EQVH…SIDD), 781–821 (QRKK…QQTA), and 834–893 (PQNN…DEDM). The segment covering 214-232 (TAEEREPHPLEHTYPKKPE) has biased composition (basic and acidic residues). S377 is subject to Phosphoserine. The span at 594 to 603 (QQEEEEEEEQ) shows a compositional bias: acidic residues. A compositionally biased stretch (basic residues) spans 609–626 (HQHKKGNKKQRKRNKKQR). Over residues 640–651 (QQQQHQKQQQQQ) the composition is skewed to low complexity. Composition is skewed to polar residues over residues 656–667 (ENSSPESLNAGS) and 684–694 (FSECNDSSSVQ). The span at 709 to 719 (SISESSSSIDD) shows a compositional bias: low complexity. Positions 781–797 (QRKKNQKRRDCKLRAQQ) are enriched in basic residues. S801 is modified (phosphoserine). Positions 836-848 (NNNNRSYSKNNKN) are enriched in low complexity. Basic and acidic residues predominate over residues 865-877 (NNEEDTKRNEADA). Acidic residues predominate over residues 884–893 (EMDDDDDEDM).

Belongs to the PIH1 family. Kintoun subfamily. Interacts with Pp1alpha-96A, Pp1-87B, Pp1-13C and flw.

It localises to the cytoplasm. Required for cytoplasmic pre-assembly of axonemal dyneins, thereby playing a central role in motility in cilia and flagella. Involved in pre-assembly of dynein arm complexes in the cytoplasm before intraflagellar transport loads them for the ciliary compartment. The polypeptide is Protein kintoun (Drosophila grimshawi (Hawaiian fruit fly)).